Reading from the N-terminus, the 254-residue chain is tRNA (guanine-N(7)-)-methyltransferase (254 aa).

Over residues 1–11 (MSISDNSREEL) the composition is skewed to basic and acidic residues. Residues 1 to 25 (MSISDNSREELGELPAGRPLQSEFN) are disordered. Residues Glu-83, Glu-108, Asp-135, and Asp-158 each coordinate S-adenosyl-L-methionine. Residue Asp-158 is part of the active site. Lys-162 provides a ligand contact to substrate. The interaction with RNA stretch occupies residues 164-169 (RHNKRR). Substrate is bound by residues Asp-194 and 232–235 (TKFE).

It belongs to the class I-like SAM-binding methyltransferase superfamily. TrmB family.

It carries out the reaction guanosine(46) in tRNA + S-adenosyl-L-methionine = N(7)-methylguanosine(46) in tRNA + S-adenosyl-L-homocysteine. It participates in tRNA modification; N(7)-methylguanine-tRNA biosynthesis. Its function is as follows. Catalyzes the formation of N(7)-methylguanine at position 46 (m7G46) in tRNA. The sequence is that of tRNA (guanine-N(7)-)-methyltransferase from Corynebacterium efficiens (strain DSM 44549 / YS-314 / AJ 12310 / JCM 11189 / NBRC 100395).